Here is a 339-residue protein sequence, read N- to C-terminus: Uroporphyrinogen decarboxylase (339 aa).

Substrate is bound by residues 21 to 25 (RQAGR), Asp71, Tyr147, Ser202, and His315.

Belongs to the uroporphyrinogen decarboxylase family. In terms of assembly, homodimer.

It localises to the cytoplasm. The enzyme catalyses uroporphyrinogen III + 4 H(+) = coproporphyrinogen III + 4 CO2. Its pathway is porphyrin-containing compound metabolism; protoporphyrin-IX biosynthesis; coproporphyrinogen-III from 5-aminolevulinate: step 4/4. Its function is as follows. Catalyzes the decarboxylation of four acetate groups of uroporphyrinogen-III to yield coproporphyrinogen-III. The chain is Uroporphyrinogen decarboxylase from Helicobacter pylori (strain Shi470).